The following is a 775-amino-acid chain: K(+)-insensitive pyrophosphate-energized proton pump (775 aa).

5 consecutive transmembrane segments (helical) span residues 9–29 (SLAV…AFFI), 65–85 (ISIL…IIPP), 108–128 (AVAF…GMNV), 160–180 (MLTV…FGIA), and 185–205 (LLGF…GGGI). Substrate is bound at residue Lys-208. Mg(2+) contacts are provided by Asp-211, Asp-215, and Asp-241. The next 6 helical transmembrane spans lie at 259 to 279 (VTLV…VGTI), 288 to 308 (FIIF…IGNL), 327 to 347 (FYIA…VFMV), 359 to 379 (FFAT…TEYF), 413 to 433 (SVWA…IYAG), and 442 to 462 (AILY…GNTI). Position 472 (Asp-472) interacts with Mg(2+). 4 helical membrane passes run 508–528 (IAIG…FTDV), 555–575 (PVFI…ALTI), 622–642 (LISL…TLGV), and 644–664 (ALGG…VFQA). 3 residues coordinate Ca(2+): Asp-671, Asp-697, and Asp-701. Position 704 (Lys-704) interacts with substrate. Helical transmembrane passes span 710–730 (ALNP…PIVV) and 735–755 (GSPG…WAIW).

Belongs to the H(+)-translocating pyrophosphatase (TC 3.A.10) family. K(+)-insensitive subfamily. As to quaternary structure, homodimer. Mg(2+) is required as a cofactor.

The protein localises to the cell membrane. The catalysed reaction is diphosphate + H2O + H(+)(in) = 2 phosphate + 2 H(+)(out). Proton pump that utilizes the energy of pyrophosphate hydrolysis as the driving force for proton movement across the membrane. Generates a proton motive force. The polypeptide is K(+)-insensitive pyrophosphate-energized proton pump (Chloroflexus aurantiacus (strain ATCC 29366 / DSM 635 / J-10-fl)).